The primary structure comprises 114 residues: uncharacterized protein (114 aa).

This is an uncharacterized protein from Acanthamoeba polyphaga (Amoeba).